Here is a 316-residue protein sequence, read N- to C-terminus: L-lactate dehydrogenase 3 (316 aa).

NAD(+)-binding residues include valine 16, aspartate 37, arginine 42, and tyrosine 68. Arginine 91 lines the substrate pocket. NAD(+) is bound by residues serine 104, 121–123 (ASN), and threonine 146. 123-126 (NPVD) is a binding site for substrate. A substrate-binding site is contributed by 151 to 154 (DSSR). Arginine 156 and histidine 171 together coordinate beta-D-fructose 1,6-bisphosphate. Histidine 178 functions as the Proton acceptor in the catalytic mechanism. Position 233 (threonine 233) interacts with substrate.

This sequence belongs to the LDH/MDH superfamily. LDH family. Homotetramer.

It localises to the cytoplasm. It catalyses the reaction (S)-lactate + NAD(+) = pyruvate + NADH + H(+). The protein operates within fermentation; pyruvate fermentation to lactate; (S)-lactate from pyruvate: step 1/1. With respect to regulation, allosterically activated by fructose 1,6-bisphosphate (FBP). Catalyzes the conversion of lactate to pyruvate. The sequence is that of L-lactate dehydrogenase 3 from Bacillus thuringiensis subsp. konkukian (strain 97-27).